The following is a 317-amino-acid chain: Protoheme IX farnesyltransferase (317 aa).

The next 8 membrane-spanning stretches (helical) occupy residues 39 to 59 (VLYL…GGIN), 60 to 80 (PILG…AGAI), 109 to 129 (GALA…WLAT), 131 to 151 (LLAA…YTMW), 160 to 180 (IVIG…AATG), 184 to 204 (LLPV…FWAL), 249 to 269 (VLHL…LAFV), and 297 to 317 (FKFS…DHLV).

This sequence belongs to the UbiA prenyltransferase family. Protoheme IX farnesyltransferase subfamily.

The protein resides in the cell inner membrane. The catalysed reaction is heme b + (2E,6E)-farnesyl diphosphate + H2O = Fe(II)-heme o + diphosphate. The protein operates within porphyrin-containing compound metabolism; heme O biosynthesis; heme O from protoheme: step 1/1. Its function is as follows. Converts heme B (protoheme IX) to heme O by substitution of the vinyl group on carbon 2 of heme B porphyrin ring with a hydroxyethyl farnesyl side group. The polypeptide is Protoheme IX farnesyltransferase (Acidiphilium cryptum (strain JF-5)).